A 151-amino-acid chain; its full sequence is Macrodomain Ter protein (151 aa).

The protein belongs to the MatP family. Homodimer.

The protein localises to the cytoplasm. Its function is as follows. Required for spatial organization of the terminus region of the chromosome (Ter macrodomain) during the cell cycle. Prevents early segregation of duplicated Ter macrodomains during cell division. Binds specifically to matS, which is a 13 bp signature motif repeated within the Ter macrodomain. The sequence is that of Macrodomain Ter protein from Enterobacter sp. (strain 638).